Reading from the N-terminus, the 371-residue chain is tRNA-specific 2-thiouridylase MnmA (371 aa).

Residues 12-19 (GMSGGVDS) and Met-38 each bind ATP. The interval 98–100 (NPD) is interaction with target base in tRNA. Cys-103 serves as the catalytic Nucleophile. An intrachain disulfide couples Cys-103 to Cys-200. An ATP-binding site is contributed by Gly-128. The interaction with tRNA stretch occupies residues 150–152 (KDQ). Residue Cys-200 is the Cysteine persulfide intermediate of the active site. The tract at residues 312 to 313 (RY) is interaction with tRNA.

Belongs to the MnmA/TRMU family. As to quaternary structure, interacts with TusE.

The protein localises to the cytoplasm. It catalyses the reaction S-sulfanyl-L-cysteinyl-[protein] + uridine(34) in tRNA + AH2 + ATP = 2-thiouridine(34) in tRNA + L-cysteinyl-[protein] + A + AMP + diphosphate + H(+). Functionally, catalyzes the 2-thiolation of uridine at the wobble position (U34) of tRNA(Lys), tRNA(Glu) and tRNA(Gln), leading to the formation of s(2)U34, the first step of tRNA-mnm(5)s(2)U34 synthesis. Sulfur is provided by IscS, via a sulfur-relay system. Binds ATP and its substrate tRNAs. In Yersinia pestis bv. Antiqua (strain Antiqua), this protein is tRNA-specific 2-thiouridylase MnmA.